A 58-amino-acid polypeptide reads, in one-letter code: Large ribosomal subunit protein bL32 (58 aa).

Disordered regions lie at residues 1–22 and 39–58; these read MAVPKKKTSNAKRDQRKAHWKR and LSGRSNSFVYPQDEEEDDEE.

It belongs to the bacterial ribosomal protein bL32 family.

The sequence is that of Large ribosomal subunit protein bL32 from Crocosphaera subtropica (strain ATCC 51142 / BH68) (Cyanothece sp. (strain ATCC 51142)).